An 801-amino-acid polypeptide reads, in one-letter code: uncharacterized protein (801 aa).

Residues M1 to A93 enclose the PE domain.

Belongs to the mycobacterial PE family. PGRS subfamily.

This is an uncharacterized protein from Mycobacterium tuberculosis (strain ATCC 25618 / H37Rv).